The sequence spans 627 residues: DNA mismatch repair protein MutL (627 aa).

The segment at 376–404 (APASTNEVREGSAARAGNYQPPEPPSREA) is disordered.

Belongs to the DNA mismatch repair MutL/HexB family.

This protein is involved in the repair of mismatches in DNA. It is required for dam-dependent methyl-directed DNA mismatch repair. May act as a 'molecular matchmaker', a protein that promotes the formation of a stable complex between two or more DNA-binding proteins in an ATP-dependent manner without itself being part of a final effector complex. This is DNA mismatch repair protein MutL from Aeromonas salmonicida (strain A449).